The sequence spans 372 residues: MKIGIPREIKNNENRVGLSPSGVHALVESGHTVLVETNAGSGSFFEDVDYKEAGAEIVAEQAKVWDVDMVIKVKEPLESEYPYFKEGLVLFTYLHLANEEKLTQALIDRKVISIAYETVQLPDRSSPLLSPMSEVAGRMSAQVGAEFLQKLNGGMGILLGGVPGVPKGKVTIIGGGQAGTNAAKIALGLGADVTILDVNPKRLQQLDDLFGGRVHTIMSNPLNIELYVKQSDLVIGAVLIPGAKAPRLVTEDMIKQMKNGSVIIDIAIDQGGIFETTDKITTHDDPTYIKHGVVHYAVANMPGAVPRTSTLALNNATLPYALMLANKGYREAFKSNQPLSLGLNTYKGHVTNKGVAEAFEMEYKSVEEALQL.

H95 is an active-site residue. 169 to 199 (KVTIIGGGQAGTNAAKIALGLGADVTILDVN) contacts NAD(+).

Belongs to the AlaDH/PNT family.

It carries out the reaction L-alanine + NAD(+) + H2O = pyruvate + NH4(+) + NADH + H(+). It functions in the pathway amino-acid degradation; L-alanine degradation via dehydrogenase pathway; NH(3) and pyruvate from L-alanine: step 1/1. In terms of biological role, may play a role in cell wall synthesis as L-alanine is an important constituent of the peptidoglycan layer. This chain is Alanine dehydrogenase 2 (ald2), found in Staphylococcus aureus (strain N315).